The sequence spans 349 residues: Alpha-centractin (349 aa).

Position 1 is an N-acetylmethionine (Met-1).

The protein belongs to the actin family. ARP1 subfamily. In terms of assembly, part of the ACTR1A/ACTB filament around which the dynactin complex is built. The filament contains 8 copies of ACTR1A and 1 ACTB. Interacts with dynein and adapters such as BICD2. Interacts with BCCIP (isoform 2/alpha).

It is found in the cytoplasm. Its subcellular location is the cytoskeleton. The protein resides in the microtubule organizing center. It localises to the centrosome. The protein localises to the cell cortex. In terms of biological role, part of the ACTR1A/ACTB filament around which the dynactin complex is built. The dynactin multiprotein complex activates the molecular motor dynein for ultra-processive transport along microtubules. The sequence is that of Alpha-centractin (ACTR1A) from Sus scrofa (Pig).